The following is a 93-amino-acid chain: Protein BOLA2 (93 aa).

Cys29 is subject to S-glutathionyl cysteine; transient; alternate. The tract at residues 72-93 (KAQTPQQWKPPSQDSATLTKDA) is disordered.

It belongs to the bolA/yrbA family. In terms of assembly, homodimer. Interacts in vitro with GRXS14, GRXS15, GRXS16 and GRXS17, but not with GRXC5. Interacts in vivo only with GRXS17. In terms of processing, can be either glutathionylated or forming covalent homodimers, depending on the oxidation state.

The protein localises to the cytoplasm. It localises to the nucleus. Its function is as follows. May act either alone or in interaction with glutaredoxin as a redox-regulated transcriptional regulator, or as a factor regulating Fe-S cluster biogenesis. The GRXS17-BOLA2 heterodimer binds a labile, oxygen sensitive iron-sulfur cluster. The sequence is that of Protein BOLA2 from Arabidopsis thaliana (Mouse-ear cress).